Reading from the N-terminus, the 61-residue chain is Large ribosomal subunit protein bL28 (61 aa).

The interval 1-24 (MAKDYVTGKKTTFGNKRSHSLNPT) is disordered. Residues 9 to 23 (KKTTFGNKRSHSLNP) show a composition bias toward polar residues.

Belongs to the bacterial ribosomal protein bL28 family.

This Lactobacillus acidophilus (strain ATCC 700396 / NCK56 / N2 / NCFM) protein is Large ribosomal subunit protein bL28.